The primary structure comprises 328 residues: Mitochondrial thiamine pyrophosphate carrier 1 (328 aa).

3 Solcar repeats span residues 12–110 (GTRR…TTQL), 120–208 (PQPI…LRPV), and 221–316 (PPGS…ALKL). Transmembrane regions (helical) follow at residues 17-37 (VVLAGGIAGLISRFCIAPLDV), 79-99 (LTGLWKGNIPAELLYVCYGGI), 126-146 (FISGALGGGIATAATYPLDLL), 185-205 (SAAVGQIVPYMGLFFATYEAL), 227-247 (AAAGIVASVLAKTGVFPLDLV), and 291-308 (GLTVSLVKAAPASAVTMW).

The protein belongs to the mitochondrial carrier (TC 2.A.29) family.

The protein localises to the mitochondrion inner membrane. In terms of biological role, mitochondrial transporter that mediates uptake of thiamine pyrophosphate (ThPP) into mitochondria. The sequence is that of Mitochondrial thiamine pyrophosphate carrier 1 (tpc1) from Emericella nidulans (strain FGSC A4 / ATCC 38163 / CBS 112.46 / NRRL 194 / M139) (Aspergillus nidulans).